A 449-amino-acid polypeptide reads, in one-letter code: Telomere resolvase ResT (449 aa).

No cofactors were found to be necessary. is required as a cofactor.

It is found in the cytoplasm. The protein localises to the nucleoid. Catalyzes the conservative, sequence-specific DNA breakage and reunion reaction that generates two hairpin telomeres from a replicated telomere substrate. Breaks two phosphodiester bonds in a single DNA duplex and joins each end with the opposite DNA strand to form covalently closed hairpin telomeres. In vitro relaxed-circular, open-circular and linearized plasmids, but not supercoiled DNA, are all substrates. Cleavage is position-dependent relative to conserved sequence elements. The protein is Telomere resolvase ResT of Borreliella burgdorferi (strain ATCC 35210 / DSM 4680 / CIP 102532 / B31) (Borrelia burgdorferi).